Here is a 678-residue protein sequence, read N- to C-terminus: THO complex subunit 5 homolog A (678 aa).

Disordered stretches follow at residues 1–35 (MASD…YSEE) and 294–329 (ALFK…VQLD). The Nuclear localization signal signature appears at 7–10 (KKRK). A compositionally biased stretch (basic and acidic residues) spans 14–35 (NRNEDVKRGRHEDQEGRYYSEE). Over residues 301–314 (DSQDDESDSDAEEE) the composition is skewed to acidic residues.

This sequence belongs to the THOC5 family. In terms of assembly, component of the THO subcomplex, which is composed of thoc1, thoc2, thoc3, thoc5, thoc6 and thoc7. Component of the transcription/export (TREX) complex at least composed of alyref/thoc4, ddx39b, sarnp/cip29, chtop and the THO subcomplex. Interacts with thoc7.

It is found in the nucleus. It localises to the nucleus speckle. The protein localises to the cytoplasm. Its function is as follows. Component of the THO subcomplex of the TREX complex which is thought to couple mRNA transcription, processing and nuclear export, and which specifically associates with spliced mRNA and not with unspliced pre-mRNA. Plays a key structural role in the oligomerization of the THO-ddx39b complex. TREX is recruited to spliced mRNAs by a transcription-independent mechanism, binds to mRNA upstream of the exon-junction complex (EJC) and is recruited in a splicing- and cap-dependent manner to a region near the 5' end of the mRNA where it functions in mRNA export to the cytoplasm via the TAP/NXF1 pathway. May be involved in cell differentiation. The chain is THO complex subunit 5 homolog A (thoc5-a) from Xenopus laevis (African clawed frog).